Reading from the N-terminus, the 250-residue chain is Petrobactin import ATP-binding protein FatE (250 aa).

The ABC transporter domain maps to 2–236; the sequence is IKIDNVKKFY…TLLTDIFETR (235 aa). 34–41 is an ATP binding site; sequence GPNGAGKS.

It belongs to the ABC transporter superfamily. As to quaternary structure, the complex is composed of two ATP-binding proteins (FatE), two transmembrane proteins (FatC and FatD) and a solute-binding protein (FpuA).

Its subcellular location is the cell membrane. The catalysed reaction is a Fe(III)-siderophore(out) + ATP + H2O = a Fe(III)-siderophore(in) + ADP + phosphate + H(+). Its function is as follows. Part of an ABC transporter complex involved in ferric-petrobactin uptake. Probably responsible for energy coupling to the transport system. This chain is Petrobactin import ATP-binding protein FatE, found in Bacillus anthracis.